Here is a 280-residue protein sequence, read N- to C-terminus: Pantothenate synthetase (280 aa).

30 to 37 (MGYLHEGH) lines the ATP pocket. H37 acts as the Proton donor in catalysis. Q61 serves as a coordination point for (R)-pantoate. Position 61 (Q61) interacts with beta-alanine. 147–150 (GKKD) contributes to the ATP binding site. Q153 is a binding site for (R)-pantoate. ATP-binding positions include V176 and 184–187 (MSSR).

It belongs to the pantothenate synthetase family. In terms of assembly, homodimer.

It is found in the cytoplasm. It carries out the reaction (R)-pantoate + beta-alanine + ATP = (R)-pantothenate + AMP + diphosphate + H(+). The protein operates within cofactor biosynthesis; (R)-pantothenate biosynthesis; (R)-pantothenate from (R)-pantoate and beta-alanine: step 1/1. Its function is as follows. Catalyzes the condensation of pantoate with beta-alanine in an ATP-dependent reaction via a pantoyl-adenylate intermediate. The polypeptide is Pantothenate synthetase (Sulfurihydrogenibium sp. (strain YO3AOP1)).